Reading from the N-terminus, the 132-residue chain is Holo-[acyl-carrier-protein] synthase (132 aa).

Mg(2+)-binding residues include aspartate 8 and glutamate 64.

It belongs to the P-Pant transferase superfamily. AcpS family. Requires Mg(2+) as cofactor.

It localises to the cytoplasm. The enzyme catalyses apo-[ACP] + CoA = holo-[ACP] + adenosine 3',5'-bisphosphate + H(+). In terms of biological role, transfers the 4'-phosphopantetheine moiety from coenzyme A to a Ser of acyl-carrier-protein. This chain is Holo-[acyl-carrier-protein] synthase, found in Shewanella woodyi (strain ATCC 51908 / MS32).